Here is a 458-residue protein sequence, read N- to C-terminus: UDP-N-acetylmuramate--L-alanine ligase (458 aa).

118–124 (GTHGKTT) lines the ATP pocket.

Belongs to the MurCDEF family.

The protein localises to the cytoplasm. It catalyses the reaction UDP-N-acetyl-alpha-D-muramate + L-alanine + ATP = UDP-N-acetyl-alpha-D-muramoyl-L-alanine + ADP + phosphate + H(+). Its pathway is cell wall biogenesis; peptidoglycan biosynthesis. In terms of biological role, cell wall formation. The polypeptide is UDP-N-acetylmuramate--L-alanine ligase (Clostridium botulinum (strain Kyoto / Type A2)).